Here is a 150-residue protein sequence, read N- to C-terminus: Arginine repressor (150 aa).

This sequence belongs to the ArgR family.

It is found in the cytoplasm. It functions in the pathway amino-acid biosynthesis; L-arginine biosynthesis [regulation]. In terms of biological role, regulates arginine biosynthesis genes. The protein is Arginine repressor of Carboxydothermus hydrogenoformans (strain ATCC BAA-161 / DSM 6008 / Z-2901).